The sequence spans 376 residues: Glutamate 5-kinase (376 aa).

Lysine 23 is a binding site for ATP. Substrate-binding residues include serine 63, aspartate 150, and asparagine 162. Residues 182–183 and 222–228 contribute to the ATP site; these read SD and TGGMASK. One can recognise a PUA domain in the interval 284 to 358; the sequence is GGALRIDAGA…GKQTAQLPEG (75 aa).

Belongs to the glutamate 5-kinase family.

The protein localises to the cytoplasm. It catalyses the reaction L-glutamate + ATP = L-glutamyl 5-phosphate + ADP. It participates in amino-acid biosynthesis; L-proline biosynthesis; L-glutamate 5-semialdehyde from L-glutamate: step 1/2. Catalyzes the transfer of a phosphate group to glutamate to form L-glutamate 5-phosphate. This Corynebacterium diphtheriae (strain ATCC 700971 / NCTC 13129 / Biotype gravis) protein is Glutamate 5-kinase.